We begin with the raw amino-acid sequence, 296 residues long: Probable lipid kinase YegS-like (296 aa).

Positions methionine 1 to histidine 130 constitute a DAGKc domain. Residues threonine 37, glycine 63–glutamate 69, and threonine 92 contribute to the ATP site. Mg(2+) contacts are provided by leucine 212, aspartate 215, and leucine 217. The active-site Proton acceptor is glutamate 268.

This sequence belongs to the diacylglycerol/lipid kinase family. YegS lipid kinase subfamily. Mg(2+) is required as a cofactor. Ca(2+) serves as cofactor.

The protein localises to the cytoplasm. In terms of biological role, probably phosphorylates lipids; the in vivo substrate is unknown. The chain is Probable lipid kinase YegS-like from Yersinia pestis bv. Antiqua (strain Angola).